Here is a 146-residue protein sequence, read N- to C-terminus: Large ribosomal subunit protein bL21 (146 aa).

The interval lysine 115–asparagine 146 is disordered. The span at alanine 128 to asparagine 146 shows a compositional bias: basic and acidic residues.

It belongs to the bacterial ribosomal protein bL21 family. In terms of assembly, part of the 50S ribosomal subunit. Contacts protein L20.

In terms of biological role, this protein binds to 23S rRNA in the presence of protein L20. The polypeptide is Large ribosomal subunit protein bL21 (Prochlorococcus marinus (strain MIT 9312)).